Consider the following 420-residue polypeptide: Serine/threonine-protein kinase PCRK2 (420 aa).

The segment at 1 to 64 (MKCFLFPLGD…SNTSMSAREN (64 aa)) is disordered. The segment covering 22–36 (SPTSNFSDVNKSGSD) has biased composition (polar residues). Residues 42–58 (VSGTSTVSSTGRNSNTS) show a composition bias toward low complexity. Phosphothreonine is present on threonine 70. One can recognise a Protein kinase domain in the interval 81–366 (FSRSGMIGEG…EVLEMVTKIV (286 aa)). Residues 87–95 (IGEGGFGCV) and lysine 115 each bind ATP. Tyrosine 164 carries the post-translational modification Phosphotyrosine. Catalysis depends on aspartate 215, which acts as the Proton acceptor. Residues serine 219 and serine 249 each carry the phosphoserine modification. 2 positions are modified to phosphothreonine: threonine 250 and threonine 255. A Phosphotyrosine modification is found at tyrosine 263. Positions 369–396 (SSPGNGGKKPQLVPLKSQETSRVEEGKN) are disordered. Over residues 387–396 (ETSRVEEGKN) the composition is skewed to basic and acidic residues.

This sequence belongs to the protein kinase superfamily. Ser/Thr protein kinase family. In terms of assembly, interacts with FLS2.

It is found in the cell membrane. It carries out the reaction L-seryl-[protein] + ATP = O-phospho-L-seryl-[protein] + ADP + H(+). The catalysed reaction is L-threonyl-[protein] + ATP = O-phospho-L-threonyl-[protein] + ADP + H(+). In terms of biological role, functions redundantly with PCRK1 in basal resistance against bacterial pathogens and in regulation of plant immunity. Functions together with PCRK1 downstream of the pathogen-associated molecular pattern (PAMP) receptor FLS2. Contributes to the induction of SARD1 and CBP60G, which are transcriptional activator of ICS1, an enzyme involved in salicylate (SA) biosynthesis upon pathogen attack. The protein is Serine/threonine-protein kinase PCRK2 of Arabidopsis thaliana (Mouse-ear cress).